A 259-amino-acid chain; its full sequence is tRNA (guanine-N(7)-)-methyltransferase (259 aa).

The segment at 1–36 (MTFPSHNPPETGHPSAAPDEALPAAEAPVPGDPEAR) is disordered. Residues 14 to 29 (PSAAPDEALPAAEAPV) show a composition bias toward low complexity. S-adenosyl-L-methionine contacts are provided by Glu-91, Glu-116, Asp-143, and Asp-166. Asp-166 is a catalytic residue. Residues Lys-170, Asp-202, and 237–240 (TKFE) contribute to the substrate site.

This sequence belongs to the class I-like SAM-binding methyltransferase superfamily. TrmB family.

It catalyses the reaction guanosine(46) in tRNA + S-adenosyl-L-methionine = N(7)-methylguanosine(46) in tRNA + S-adenosyl-L-homocysteine. It participates in tRNA modification; N(7)-methylguanine-tRNA biosynthesis. In terms of biological role, catalyzes the formation of N(7)-methylguanine at position 46 (m7G46) in tRNA. This Aromatoleum aromaticum (strain DSM 19018 / LMG 30748 / EbN1) (Azoarcus sp. (strain EbN1)) protein is tRNA (guanine-N(7)-)-methyltransferase.